Consider the following 379-residue polypeptide: Queuine tRNA-ribosyltransferase (379 aa).

Catalysis depends on D93, which acts as the Proton acceptor. Residues 93–97, D147, Q191, and G218 contribute to the substrate site; that span reads DSGGF. Residues 249 to 255 are RNA binding; the sequence is GVGKPED. D268 functions as the Nucleophile in the catalytic mechanism. The tract at residues 273–277 is RNA binding; important for wobble base 34 recognition; sequence TRNAR. The Zn(2+) site is built by C306, C308, C311, and H337.

Belongs to the queuine tRNA-ribosyltransferase family. As to quaternary structure, homodimer. Within each dimer, one monomer is responsible for RNA recognition and catalysis, while the other monomer binds to the replacement base PreQ1. The cofactor is Zn(2+).

It catalyses the reaction 7-aminomethyl-7-carbaguanine + guanosine(34) in tRNA = 7-aminomethyl-7-carbaguanosine(34) in tRNA + guanine. It functions in the pathway tRNA modification; tRNA-queuosine biosynthesis. Catalyzes the base-exchange of a guanine (G) residue with the queuine precursor 7-aminomethyl-7-deazaguanine (PreQ1) at position 34 (anticodon wobble position) in tRNAs with GU(N) anticodons (tRNA-Asp, -Asn, -His and -Tyr). Catalysis occurs through a double-displacement mechanism. The nucleophile active site attacks the C1' of nucleotide 34 to detach the guanine base from the RNA, forming a covalent enzyme-RNA intermediate. The proton acceptor active site deprotonates the incoming PreQ1, allowing a nucleophilic attack on the C1' of the ribose to form the product. After dissociation, two additional enzymatic reactions on the tRNA convert PreQ1 to queuine (Q), resulting in the hypermodified nucleoside queuosine (7-(((4,5-cis-dihydroxy-2-cyclopenten-1-yl)amino)methyl)-7-deazaguanosine). This Actinobacillus succinogenes (strain ATCC 55618 / DSM 22257 / CCUG 43843 / 130Z) protein is Queuine tRNA-ribosyltransferase.